We begin with the raw amino-acid sequence, 350 residues long: tRNA uridine(34) hydroxylase (350 aa).

In terms of domain architecture, Rhodanese spans 146-240; that stretch reads DDPDAVFIDM…YARRARAQGL (95 aa). The Cysteine persulfide intermediate role is filled by cysteine 200. Positions 319–328 are enriched in basic and acidic residues; sequence RRRRAGRENG. Residues 319-350 are disordered; sequence RRRRAGRENGNKIFNKSRGRLNSKLSIPDPAE.

It belongs to the TrhO family.

It catalyses the reaction uridine(34) in tRNA + AH2 + O2 = 5-hydroxyuridine(34) in tRNA + A + H2O. Catalyzes oxygen-dependent 5-hydroxyuridine (ho5U) modification at position 34 in tRNAs. In Salmonella paratyphi B (strain ATCC BAA-1250 / SPB7), this protein is tRNA uridine(34) hydroxylase.